We begin with the raw amino-acid sequence, 207 residues long: Holliday junction branch migration complex subunit RuvA (207 aa).

Positions 1–71 (MIVSIAGKLV…RLTPRLIGFS (71 aa)) are domain I. Positions 72–149 (TLPERQFFDL…RFALMVAGGE (78 aa)) are domain II. The flexible linker stretch occupies residues 150 to 155 (VADAME). The domain III stretch occupies residues 156 to 207 (VESPIVSDTYDALVTLGHSESDARKLIDETLATGKKFKDTESLLTAIYQRSK).

It belongs to the RuvA family. Homotetramer. Forms an RuvA(8)-RuvB(12)-Holliday junction (HJ) complex. HJ DNA is sandwiched between 2 RuvA tetramers; dsDNA enters through RuvA and exits via RuvB. An RuvB hexamer assembles on each DNA strand where it exits the tetramer. Each RuvB hexamer is contacted by two RuvA subunits (via domain III) on 2 adjacent RuvB subunits; this complex drives branch migration. In the full resolvosome a probable DNA-RuvA(4)-RuvB(12)-RuvC(2) complex forms which resolves the HJ.

It is found in the cytoplasm. The RuvA-RuvB-RuvC complex processes Holliday junction (HJ) DNA during genetic recombination and DNA repair, while the RuvA-RuvB complex plays an important role in the rescue of blocked DNA replication forks via replication fork reversal (RFR). RuvA specifically binds to HJ cruciform DNA, conferring on it an open structure. The RuvB hexamer acts as an ATP-dependent pump, pulling dsDNA into and through the RuvAB complex. HJ branch migration allows RuvC to scan DNA until it finds its consensus sequence, where it cleaves and resolves the cruciform DNA. In Rhodopirellula baltica (strain DSM 10527 / NCIMB 13988 / SH1), this protein is Holliday junction branch migration complex subunit RuvA.